The following is an 842-amino-acid chain: Alanine--tRNA ligase (842 aa).

Positions 549, 553, 650, and 654 each coordinate Zn(2+).

Belongs to the class-II aminoacyl-tRNA synthetase family. The cofactor is Zn(2+).

The protein resides in the cytoplasm. It catalyses the reaction tRNA(Ala) + L-alanine + ATP = L-alanyl-tRNA(Ala) + AMP + diphosphate. Functionally, catalyzes the attachment of alanine to tRNA(Ala) in a two-step reaction: alanine is first activated by ATP to form Ala-AMP and then transferred to the acceptor end of tRNA(Ala). Also edits incorrectly charged Ser-tRNA(Ala) and Gly-tRNA(Ala) via its editing domain. In Campylobacter jejuni subsp. jejuni serotype O:6 (strain 81116 / NCTC 11828), this protein is Alanine--tRNA ligase.